The chain runs to 386 residues: Galactokinase (386 aa).

35–38 (EHTD) is a binding site for substrate. ATP contacts are provided by residues Ser-69 and 125 to 131 (GAGLSSS). Positions 131 and 163 each coordinate Mg(2+). Asp-175 (proton acceptor) is an active-site residue. Tyr-224 is a substrate binding site.

This sequence belongs to the GHMP kinase family. GalK subfamily.

It is found in the cytoplasm. It catalyses the reaction alpha-D-galactose + ATP = alpha-D-galactose 1-phosphate + ADP + H(+). It functions in the pathway carbohydrate metabolism; galactose metabolism. Functionally, catalyzes the transfer of the gamma-phosphate of ATP to D-galactose to form alpha-D-galactose-1-phosphate (Gal-1-P). This Vibrio vulnificus (strain YJ016) protein is Galactokinase.